A 769-amino-acid polypeptide reads, in one-letter code: Ligand-dependent nuclear receptor-interacting factor 1 (769 aa).

Residues Lys259 and Lys279 each participate in a glycyl lysine isopeptide (Lys-Gly) (interchain with G-Cter in SUMO2) cross-link. Over residues 378 to 387 the composition is skewed to polar residues; sequence QIDQQNSVSP. The interval 378–400 is disordered; the sequence is QIDQQNSVSPDTPVRKDTLQTVS. Ser402, Ser430, and Ser436 each carry phosphoserine. Lys446 participates in a covalent cross-link: Glycyl lysine isopeptide (Lys-Gly) (interchain with G-Cter in SUMO2). Phosphoserine is present on Ser502. Residues 528–562 are disordered; it reads DQEPKIHNEMASTSDKGAQGRNDKKDSQGRSNKAL. The short motif at 580 to 584 is the PxVxL motif element; it reads LRVCL. Ser599 carries the phosphoserine modification. Lys605 participates in a covalent cross-link: Glycyl lysine isopeptide (Lys-Gly) (interchain with G-Cter in SUMO2). 2 consecutive short sequence motifs (nuclear localization signal) follow at residues 628–631 and 642–645; these read KKRK. Residue Lys702 forms a Glycyl lysine isopeptide (Lys-Gly) (interchain with G-Cter in SUMO2) linkage. At Thr732 the chain carries Phosphothreonine. Residues 740 to 769 are a coiled coil; sequence IRDEKIRRLKQVLREKEAALEEMRKKMHQK.

The protein belongs to the LRIF1 family. As to quaternary structure, interacts with RARA. Interacts with SMCHD1; leading to recruitment to inactivated chromosome X in females. Interacts (via PxVxL motif) with HP1 (CBX1/HP1-beta, CBX3/HP1-gamma and CBX5/HP1-alpha). In terms of tissue distribution, widely expressed, with the highest expression levels in heart, liver and placenta.

It localises to the chromosome. The protein localises to the nucleus matrix. Its function is as follows. Together with SMCHD1, involved in chromosome X inactivation in females by promoting the compaction of heterochromatin. Also able to repress the ligand-induced transcriptional activity of retinoic acid receptor alpha (RARA), possibly through direct recruitment of histone deacetylases. Also required for silencing of the DUX4 locus in somatic cells. The polypeptide is Ligand-dependent nuclear receptor-interacting factor 1 (Homo sapiens (Human)).